The sequence spans 353 residues: Phosphate acyltransferase (353 aa).

The protein belongs to the PlsX family. As to quaternary structure, homodimer. Probably interacts with PlsY.

It is found in the cytoplasm. The enzyme catalyses a fatty acyl-[ACP] + phosphate = an acyl phosphate + holo-[ACP]. The protein operates within lipid metabolism; phospholipid metabolism. Functionally, catalyzes the reversible formation of acyl-phosphate (acyl-PO(4)) from acyl-[acyl-carrier-protein] (acyl-ACP). This enzyme utilizes acyl-ACP as fatty acyl donor, but not acyl-CoA. In Nitrosospira multiformis (strain ATCC 25196 / NCIMB 11849 / C 71), this protein is Phosphate acyltransferase.